Consider the following 430-residue polypeptide: Probable WRKY transcription factor 14 (430 aa).

The segment at residues 211-277 (SGEVVPSDLW…YTSEHNHPWP (67 aa)) is a DNA-binding region (WRKY). The interval 283–366 (LAGSTRSSTS…APYRPELHDH (84 aa)) is disordered. The segment covering 286-306 (STRSSTSSSSNPNPSKPSTAN) has biased composition (low complexity). The span at 307-319 (VNSSSIGSQNTIY) shows a compositional bias: polar residues. Acidic residues predominate over residues 340–354 (GDDMELENVDDDDDN).

Belongs to the WRKY group II-e family.

The protein localises to the nucleus. Functionally, transcription factor. Interacts specifically with the W box (5'-(T)TGAC[CT]-3'), a frequently occurring elicitor-responsive cis-acting element. In Arabidopsis thaliana (Mouse-ear cress), this protein is Probable WRKY transcription factor 14 (WRKY14).